The chain runs to 470 residues: Cysteine--tRNA ligase (470 aa).

Cys-28 contributes to the Zn(2+) binding site. The 'HIGH' region signature appears at 30-40 (PTVYNYIHIGN). Positions 212, 237, and 241 each coordinate Zn(2+). A 'KMSKS' region motif is present at residues 271–275 (KMSKS). Lys-274 lines the ATP pocket.

This sequence belongs to the class-I aminoacyl-tRNA synthetase family. In terms of assembly, monomer. Requires Zn(2+) as cofactor.

It localises to the cytoplasm. It carries out the reaction tRNA(Cys) + L-cysteine + ATP = L-cysteinyl-tRNA(Cys) + AMP + diphosphate. This is Cysteine--tRNA ligase from Levilactobacillus brevis (strain ATCC 367 / BCRC 12310 / CIP 105137 / JCM 1170 / LMG 11437 / NCIMB 947 / NCTC 947) (Lactobacillus brevis).